The primary structure comprises 311 residues: Malate dehydrogenase (311 aa).

Residues 10-15 and Asp-35 contribute to the NAD(+) site; that span reads GAGRVG. Substrate contacts are provided by Arg-84 and Arg-90. NAD(+)-binding positions include Asn-97 and 120–122; that span reads VTN. The substrate site is built by Asn-122 and Arg-153. His-177 functions as the Proton acceptor in the catalytic mechanism.

The protein belongs to the LDH/MDH superfamily. MDH type 3 family.

The catalysed reaction is (S)-malate + NAD(+) = oxaloacetate + NADH + H(+). Functionally, catalyzes the reversible oxidation of malate to oxaloacetate. The chain is Malate dehydrogenase from Nitrosococcus oceani (strain ATCC 19707 / BCRC 17464 / JCM 30415 / NCIMB 11848 / C-107).